A 161-amino-acid polypeptide reads, in one-letter code: Arachidonate 5-lipoxygenase-activating protein (161 aa).

The Lumenal portion of the chain corresponds to 1–8; it reads MDQETVGN. The chain crosses the membrane as a helical span at residues 9 to 30; sequence VVLLAIVTLISVVQNGFFAHKV. The Cytoplasmic portion of the chain corresponds to 31–52; sequence EHESRTQNGRSFQRTGTLAFER. Residues 53-77 traverse the membrane as a helical segment; that stretch reads VYTANQNCVDAYPTFLAVLWSAGLL. Residues 78–80 lie on the Lumenal side of the membrane; that stretch reads CSQ. The chain crosses the membrane as a helical span at residues 81-102; the sequence is VPAAFAGLMYLFVRQKYFVGYL. Residues 103 to 107 are Cytoplasmic-facing; the sequence is GERTQ. Residues 108 to 115 lie within the membrane without spanning it; sequence STPGYIFG. A helical membrane pass occupies residues 116–128; the sequence is KRIILFLFLMSVA. The Lumenal segment spans residues 129 to 161; the sequence is GIFNYYLIFFFGSDFENYIKTISTTISPLLLIP.

Belongs to the MAPEG family. Homotrimer. Interacts with LTC4S and ALOX5.

It localises to the nucleus membrane. It is found in the endoplasmic reticulum membrane. In terms of biological role, required for leukotriene biosynthesis by ALOX5 (5-lipoxygenase). Anchors ALOX5 to the membrane. Binds arachidonic acid, and could play an essential role in the transfer of arachidonic acid to ALOX5. Binds to MK-886, a compound that blocks the biosynthesis of leukotrienes. The sequence is that of Arachidonate 5-lipoxygenase-activating protein (ALOX5AP) from Homo sapiens (Human).